A 338-amino-acid polypeptide reads, in one-letter code: 1-aminocyclopropane-1-carboxylate deaminase (338 aa).

K51 is modified (N6-(pyridoxal phosphate)lysine). The active-site Nucleophile is the S78.

This sequence belongs to the ACC deaminase/D-cysteine desulfhydrase family. In terms of assembly, homotrimer. Requires pyridoxal 5'-phosphate as cofactor.

The enzyme catalyses 1-aminocyclopropane-1-carboxylate + H2O = 2-oxobutanoate + NH4(+). Functionally, catalyzes a cyclopropane ring-opening reaction, the irreversible conversion of 1-aminocyclopropane-1-carboxylate (ACC) to ammonia and alpha-ketobutyrate. Allows growth on ACC as a nitrogen source. The polypeptide is 1-aminocyclopropane-1-carboxylate deaminase (Burkholderia vietnamiensis (strain G4 / LMG 22486) (Burkholderia cepacia (strain R1808))).